A 285-amino-acid polypeptide reads, in one-letter code: Neuralized-like protein 2 (285 aa).

Positions 1 to 20 (MAAASEPVDSGALWGLERPE) are disordered. One can recognise an NHR domain in the interval 23 to 244 (PTRFHRVHGA…STKSVRLVQL (222 aa)). Residues 250-285 (SLQTLCRLVIQRSMVHRLAIDGLHLPKELKDFCKYE) form the SOCS box domain.

As to quaternary structure, probable component the ECS(NEURL2) E3 ubiquitin-protein ligase complex consisting of ELOB/Elongin B, ELOC/Elongin C, CUL5, RBX1 and NEURL2. Interacts with CTNNB1. Expressed specifically in skeletal and cardiac muscles.

Its subcellular location is the cytoplasm. It functions in the pathway protein modification; protein ubiquitination. Plays an important role in the process of myofiber differentiation and maturation. Probable substrate-recognition component of a SCF-like ECS (Elongin BC-CUL2/5-SOCS-box protein) E3 ubiquitin-protein ligase complex, which mediates the ubiquitination of proteins. Probably contributes to catalysis through recognition and positioning of the substrate and the ubiquitin-conjugating enzyme. During myogenesis, controls the ubiquitination and degradation of the specific pool of CTNNB1/beta-catenin located at the sarcolemma. This Homo sapiens (Human) protein is Neuralized-like protein 2 (NEURL2).